A 257-amino-acid chain; its full sequence is Acetyl-coenzyme A carboxylase carboxyl transferase subunit beta (257 aa).

A CoA carboxyltransferase N-terminal domain is found at 5 to 257; sequence VFTKCERCKQ…DLERLLGFVG (253 aa). Zn(2+) contacts are provided by Cys-9, Cys-12, Cys-28, and Cys-31. The C4-type zinc finger occupies 9 to 31; the sequence is CERCKQPVYEKDLRARFNVCPNC.

It belongs to the AccD/PCCB family. In terms of assembly, acetyl-CoA carboxylase is a heterohexamer composed of biotin carboxyl carrier protein (AccB), biotin carboxylase (AccC) and two subunits each of ACCase subunit alpha (AccA) and ACCase subunit beta (AccD). The cofactor is Zn(2+).

The protein localises to the cytoplasm. The enzyme catalyses N(6)-carboxybiotinyl-L-lysyl-[protein] + acetyl-CoA = N(6)-biotinyl-L-lysyl-[protein] + malonyl-CoA. It participates in lipid metabolism; malonyl-CoA biosynthesis; malonyl-CoA from acetyl-CoA: step 1/1. Component of the acetyl coenzyme A carboxylase (ACC) complex. Biotin carboxylase (BC) catalyzes the carboxylation of biotin on its carrier protein (BCCP) and then the CO(2) group is transferred by the transcarboxylase to acetyl-CoA to form malonyl-CoA. In Rubrobacter xylanophilus (strain DSM 9941 / JCM 11954 / NBRC 16129 / PRD-1), this protein is Acetyl-coenzyme A carboxylase carboxyl transferase subunit beta.